A 225-amino-acid polypeptide reads, in one-letter code: J-type co-chaperone jac1, mitochondrial (225 aa).

The transit peptide at 1–49 directs the protein to the mitochondrion; it reads MLKQAGNQSFRPFISFAQKSLFNRQITGNHWIFARFKFYPLNKIVNYNH. Residues 61-137 form the J domain; sequence NFYKQFEGDI…LTRAEYILQL (77 aa). The HSP70 binding motif lies at 98 to 100; that stretch reads HPD.

The protein belongs to the HscB family. In terms of assembly, interacts with ssc1.

It localises to the mitochondrion matrix. In terms of biological role, co-chaperone required for the assembly of iron-sulfur (Fe/S) clusters in mitochondria. Stimulates the ATPase activity of the mitochondrial Hsp70 chaperone ssc1, to mediate the transfer of iron-sulfur clusters from isu1 to grx5. This Schizosaccharomyces pombe (strain 972 / ATCC 24843) (Fission yeast) protein is J-type co-chaperone jac1, mitochondrial.